The following is a 271-amino-acid chain: Solute carrier family 66 member 2 (271 aa).

The next 3 membrane-spanning stretches (helical) occupy residues 8 to 28 (WLLV…MVFG), 49 to 69 (FSTY…LFWF), and 76 to 96 (PLLW…KLCT). A PQ-loop 1 domain is found at 14-80 (HQLVSWGAAA…RRFESPLLWQ (67 aa)). S110 carries the post-translational modification Phosphoserine. The next 3 membrane-spanning stretches (helical) occupy residues 145–165 (DYVQ…YLSI), 168–188 (ALFV…LGVP), and 232–252 (VCGL…YAFA). One can recognise a PQ-loop 2 domain in the interval 178-233 (AVLTEAMLGVPQLYRNHRHQSTEGMSIKMVLMWTSGDAFKTAYFLLKGAPLQFSVC).

It localises to the membrane. In Homo sapiens (Human), this protein is Solute carrier family 66 member 2.